A 553-amino-acid polypeptide reads, in one-letter code: RNA exonuclease 1 (553 aa).

Ser24 carries the phosphoserine modification. Positions 167–194 form a coiled coil; the sequence is MEKINKLKELQKKKKITINDLVLSEQQL. Residues 225–373 enclose the Exonuclease domain; it reads IFALDCEMCL…EDARACLELT (149 aa). A coiled-coil region spans residues 509-533; sequence WNNLSTELEFIQDKKERLDKRRERE.

It belongs to the REXO1/REXO3 family.

Its subcellular location is the nucleus. Its function is as follows. 3' exoribonuclease required for 5S rRNA maturation and for the proper maturation of the 5' cistron of the tRNA-Arg3 dicistronic gene. Involved with REX2 in the maturation of the 5.8S rRNA, and with REX2 and REX3, in the 3' processing of the U5L snRNA. In Saccharomyces cerevisiae (strain ATCC 204508 / S288c) (Baker's yeast), this protein is RNA exonuclease 1 (RNH70).